We begin with the raw amino-acid sequence, 491 residues long: Serine/threonine-protein kinase 3 (491 aa).

Met1 is subject to N-acetylmethionine. The residue at position 15 (Ser15) is a Phosphoserine; by PLK1. The Protein kinase domain occupies 27–278 (FDVLEKLGEG…ATQLLQHPFI (252 aa)). ATP is bound by residues 33–41 (LGEGSYGSV) and Lys56. Thr117 bears the Phosphothreonine; by PKB/AKT1 mark. Asp146 serves as the catalytic Proton acceptor. Residues Asn151 and Asp164 each coordinate Mg(2+). Phosphothreonine; by autocatalysis is present on residues Thr174 and Thr180. Residues 287-328 (LRDLITEAMEIKAKRHEEQQRELEEEEENSDEDELDSHTMVK) are a coiled coil. The segment at 301–327 (RHEEQQRELEEEEENSDEDELDSHTMV) is disordered. Residues 309 to 321 (LEEEEENSDEDEL) show a composition bias toward acidic residues. A Phosphoserine modification is found at Ser316. 2 positions are modified to phosphothreonine; by autocatalysis: Thr336 and Thr378. Positions 370-392 (EDEEEEDGTMKRNATSPQVQRPS) are disordered. The segment covering 381 to 390 (RNATSPQVQR) has biased composition (polar residues). At Thr384 the chain carries Phosphothreonine; by PKB/AKT1. Phosphoserine is present on residues Ser385 and Ser444. One can recognise an SARAH domain in the interval 437-484 (FDFLKNLSLEELQMRLKALDPMMEREIEELRQRYTAKRQPILDAMDAK). The stretch at 442–475 (NLSLEELQMRLKALDPMMEREIEELRQRYTAKRQ) forms a coiled coil.

This sequence belongs to the protein kinase superfamily. STE Ser/Thr protein kinase family. STE20 subfamily. As to quaternary structure, homodimer; mediated via the coiled-coil region. Interacts with NORE1, which inhibits autoactivation. Interacts with and stabilizes SAV1. Interacts with RAF1, which prevents dimerization and phosphorylation. Interacts with RASSF1. Interacts (via SARAH domain) with isoform 1 of NEK2. Interacts with ESR1 only in the presence of SAV1. Interacts with PKB/AKT1. Forms a tripartite complex with MOBKL1B and STK38. Interacts with RASSF2 (via SARAH domain). Interacts with DLG5 (via PDZ domain 3). Interacts with LATS1; this interaction is inhibited in the presence of DLG5. Interacts with MARK3 in the presence of DLG5. Interacts with RASSF5; this interaction inhibits STK3 autoactivation through heterodimerization. Interacts (when phosphorylated) with SLMAP (via FHA domain); the interaction associates STK3 with the STRIPAK complex. Mg(2+) is required as a cofactor. Post-translationally, autophosphorylated on two residues Thr-174 and Thr-180, leading to activation. Phosphorylation at Thr-117 and Thr-384 by PKB/AKT1, leads to inhibition of its: cleavage, kinase activity, autophosphorylation at Thr-180, binding to RASSF1 and nuclear translocation, and increase in its binding to RAF1. Phosphorylated at Ser-15 by PLK1, leading to activation. When autophosphorylated at Thr-180, recruits STRIPAK complex and promotes PP2A-mediated dephosphorylation and inactivation of STK3. In terms of processing, proteolytically cleaved by caspase-3 during apoptosis. Proteolytic cleavage results in kinase activation and nuclear translocation of the truncated form (MST1/N). Ubiquitinated by TRIM69; leading to its redistribution to the perinuclear cytoskeleton, where it is phosphorylated by PLK1 and subsequently activated. In terms of tissue distribution, expressed at high levels in adult kidney, skeletal and placenta tissues and at very low levels in adult heart, lung and brain tissues.

The protein localises to the cytoplasm. It is found in the nucleus. It localises to the cytoskeleton. The protein resides in the microtubule organizing center. Its subcellular location is the centrosome. It carries out the reaction L-seryl-[protein] + ATP = O-phospho-L-seryl-[protein] + ADP + H(+). The enzyme catalyses L-threonyl-[protein] + ATP = O-phospho-L-threonyl-[protein] + ADP + H(+). With respect to regulation, inhibited by the C-terminal non-catalytic region. Activated by caspase-cleavage. Full activation also requires homodimerization and autophosphorylation of Thr-180, which are inhibited by the proto-oncogene product RAF1. Activated by RASSF1 which acts by preventing its dephosphorylation. When autophosphorylated at Thr-180, recruits STRIPAK complex and promotes PP2A-mediated dephosphorylation and inactivation of STK3. Its function is as follows. Stress-activated, pro-apoptotic kinase which, following caspase-cleavage, enters the nucleus and induces chromatin condensation followed by internucleosomal DNA fragmentation. Key component of the Hippo signaling pathway which plays a pivotal role in organ size control and tumor suppression by restricting proliferation and promoting apoptosis. The core of this pathway is composed of a kinase cascade wherein STK3/MST2 and STK4/MST1, in complex with its regulatory protein SAV1, phosphorylates and activates LATS1/2 in complex with its regulatory protein MOB1, which in turn phosphorylates and inactivates YAP1 oncoprotein and WWTR1/TAZ. Phosphorylation of YAP1 by LATS2 inhibits its translocation into the nucleus to regulate cellular genes important for cell proliferation, cell death, and cell migration. STK3/MST2 and STK4/MST1 are required to repress proliferation of mature hepatocytes, to prevent activation of facultative adult liver stem cells (oval cells), and to inhibit tumor formation. Phosphorylates NKX2-1. Phosphorylates NEK2 and plays a role in centrosome disjunction by regulating the localization of NEK2 to centrosome, and its ability to phosphorylate CROCC and CEP250. In conjunction with SAV1, activates the transcriptional activity of ESR1 through the modulation of its phosphorylation. Positively regulates RAF1 activation via suppression of the inhibitory phosphorylation of RAF1 on 'Ser-259'. Phosphorylates MOBKL1A and RASSF2. Phosphorylates MOBKL1B on 'Thr-74'. Acts cooperatively with MOBKL1B to activate STK38. This chain is Serine/threonine-protein kinase 3, found in Homo sapiens (Human).